The chain runs to 422 residues: Telomerase-associated protein of 50 kDa (422 aa).

Component of the telomerase holoenzyme complex, composed of the catalytic core (the catalytic subunit TERT, the telomerase RNA template component TER and TAP65/p65), which is associated with two heterotrimeric subcomplexes: (i) the replication protein A (RPA)-related subcomplex, composed of TEB1, RPA2/TEB2 and RPA3/TEB3 and (ii) the CST-like subcomplex, composed of TAP75/p75, TAP45/p45 and TAP19/p19. TEB1 and the CST-like subcomplex are tethered to the catalytic core by TAP50/p50.

It localises to the chromosome. Its subcellular location is the telomere. Functionally, tethering component of the holoenzyme telomerase ribonucleoprotein (RNP) complex. Telomerase is an essential ribonucleoprotein enzyme that copies new telomeric repeats onto chromosome ends by repetitively synthesizing the short telomere-repeat sequence 5'-TTGGGG-3' using an RNA template component TER. In the telomerase holoenzyme complex, acts as a hub that anchors the two heterotrimeric subcomplexes with the catalytic core. This chain is Telomerase-associated protein of 50 kDa, found in Tetrahymena thermophila (strain SB210).